A 128-amino-acid chain; its full sequence is uncharacterized protein (128 aa).

The VOC domain occupies Ser5–Gln128. A divalent metal cation is bound by residues His8, Glu56, His77, and Glu124.

This is an uncharacterized protein from Bacillus subtilis (strain 168).